A 234-amino-acid chain; its full sequence is Enolase-phosphatase E1 (234 aa).

The segment at 212 to 234 (RPGNYPQPQHSHFKISSFEGLNP) is disordered.

Belongs to the HAD-like hydrolase superfamily. MasA/MtnC family. Monomer. Mg(2+) serves as cofactor.

The catalysed reaction is 5-methylsulfanyl-2,3-dioxopentyl phosphate + H2O = 1,2-dihydroxy-5-(methylsulfanyl)pent-1-en-3-one + phosphate. It functions in the pathway amino-acid biosynthesis; L-methionine biosynthesis via salvage pathway; L-methionine from S-methyl-5-thio-alpha-D-ribose 1-phosphate: step 3/6. The protein operates within amino-acid biosynthesis; L-methionine biosynthesis via salvage pathway; L-methionine from S-methyl-5-thio-alpha-D-ribose 1-phosphate: step 4/6. In terms of biological role, bifunctional enzyme that catalyzes the enolization of 2,3-diketo-5-methylthiopentyl-1-phosphate (DK-MTP-1-P) into the intermediate 2-hydroxy-3-keto-5-methylthiopentenyl-1-phosphate (HK-MTPenyl-1-P), which is then dephosphorylated to form the acireductone 1,2-dihydroxy-3-keto-5-methylthiopentene (DHK-MTPene). The chain is Enolase-phosphatase E1 from Leptospira interrogans serogroup Icterohaemorrhagiae serovar copenhageni (strain Fiocruz L1-130).